We begin with the raw amino-acid sequence, 372 residues long: Alanine dehydrogenase 1 (372 aa).

His94 is an active-site residue. 170 to 200 (TYVIFGGGVAATNAANVALGLNAKVIIIELN) provides a ligand contact to NAD(+).

The protein belongs to the AlaDH/PNT family.

The catalysed reaction is L-alanine + NAD(+) + H2O = pyruvate + NH4(+) + NADH + H(+). It participates in amino-acid degradation; L-alanine degradation via dehydrogenase pathway; NH(3) and pyruvate from L-alanine: step 1/1. Its function is as follows. May play a role in cell wall synthesis as L-alanine is an important constituent of the peptidoglycan layer. This Staphylococcus aureus (strain MSSA476) protein is Alanine dehydrogenase 1 (ald1).